The primary structure comprises 132 residues: UPF0102 protein Acid_2433 (132 aa).

Belongs to the UPF0102 family.

In Solibacter usitatus (strain Ellin6076), this protein is UPF0102 protein Acid_2433.